The primary structure comprises 223 residues: Thymidylate kinase (223 aa).

7–14 is an ATP binding site; that stretch reads GIDGAGKS.

This sequence belongs to the thymidylate kinase family.

It carries out the reaction dTMP + ATP = dTDP + ADP. Its function is as follows. Phosphorylation of dTMP to form dTDP in both de novo and salvage pathways of dTTP synthesis. This Prosthecochloris aestuarii (strain DSM 271 / SK 413) protein is Thymidylate kinase.